The following is a 432-amino-acid chain: MGNNVVVLGTQWGDEGKGKIVDLLTERAKYVVRYQGGHNAGHTLVINGEKTVLHLIPSGILRENVTSIIGNGVVLSPAALMKEMKGLEDRGIPVRERLLLSEACPLILDYHVALDVAREKARGAKAIGTTGRGIGPAYEDKVARRGLRVGDLFDKATFADKLKEVMEYHNFQLVNFYKAEAVDYQKVLDDVMAIADILTGMVVDVSDLLDQARKRGDFVMFEGAQGTLLDIDHGTYPYVTSSNTTAGGVATGSGLGPRYVDYVLGIIKAYSTRVGAGPFPTELFDETGEFLCKQGNEFGATTGRRRRTGWLDAVAVRRAVQINSLSGFCLTKLDVLDGLKEVKICVGYRMPDGREVTTTPLAADNWEGIEPIYETMPGWSETTFGVKERSGLPQAALNYIQRIEELTGVPVDIISTGPDRTETMILRDPFDA.

Residues 13 to 19 (GDEGKGK) and 41 to 43 (GHT) each bind GTP. Asp-14 acts as the Proton acceptor in catalysis. Asp-14 and Gly-41 together coordinate Mg(2+). IMP is bound by residues 14–17 (DEGK), 39–42 (NAGH), Thr-130, Arg-144, Gln-225, Thr-240, and Arg-304. His-42 (proton donor) is an active-site residue. Residue 300–306 (ATTGRRR) coordinates substrate. Residues Arg-306, 332-334 (KLD), and 415-417 (STG) contribute to the GTP site.

This sequence belongs to the adenylosuccinate synthetase family. Homodimer. The cofactor is Mg(2+).

The protein resides in the cytoplasm. The catalysed reaction is IMP + L-aspartate + GTP = N(6)-(1,2-dicarboxyethyl)-AMP + GDP + phosphate + 2 H(+). The protein operates within purine metabolism; AMP biosynthesis via de novo pathway; AMP from IMP: step 1/2. In terms of biological role, plays an important role in the de novo pathway of purine nucleotide biosynthesis. Catalyzes the first committed step in the biosynthesis of AMP from IMP. The protein is Adenylosuccinate synthetase of Klebsiella pneumoniae (strain 342).